The chain runs to 356 residues: Fe(3+) ions import ATP-binding protein FbpC 2 (356 aa).

One can recognise an ABC transporter domain in the interval 12 to 246; sequence LTVKNLNKFF…PNHLETAKFM (235 aa). 44–51 lines the ATP pocket; the sequence is GSSGCGKT.

This sequence belongs to the ABC transporter superfamily. Fe(3+) ion importer (TC 3.A.1.10) family. In terms of assembly, the complex is composed of two ATP-binding proteins (FbpC), two transmembrane proteins (FbpB) and a solute-binding protein (FbpA).

The protein localises to the cell inner membrane. It carries out the reaction Fe(3+)(out) + ATP + H2O = Fe(3+)(in) + ADP + phosphate + H(+). Its function is as follows. Part of the ABC transporter complex FbpABC involved in Fe(3+) ions import. Responsible for energy coupling to the transport system. This chain is Fe(3+) ions import ATP-binding protein FbpC 2, found in Haemophilus influenzae (strain ATCC 51907 / DSM 11121 / KW20 / Rd).